The sequence spans 163 residues: Ribosome maturation factor RimM (163 aa).

One can recognise a PRC barrel domain in the interval 90–155 (VGEYYCKDLV…ADIDLNKKRL (66 aa)).

This sequence belongs to the RimM family. Binds ribosomal protein uS19.

The protein resides in the cytoplasm. In terms of biological role, an accessory protein needed during the final step in the assembly of 30S ribosomal subunit, possibly for assembly of the head region. Essential for efficient processing of 16S rRNA. May be needed both before and after RbfA during the maturation of 16S rRNA. It has affinity for free ribosomal 30S subunits but not for 70S ribosomes. In Neorickettsia sennetsu (strain ATCC VR-367 / Miyayama) (Ehrlichia sennetsu), this protein is Ribosome maturation factor RimM.